The sequence spans 272 residues: Phosphate import ATP-binding protein PstB (272 aa).

An ABC transporter domain is found at 20–267; the sequence is VKKEVVYETN…PADQRTADYI (248 aa). 58–65 serves as a coordination point for ATP; sequence GPSGCGKS.

Belongs to the ABC transporter superfamily. Phosphate importer (TC 3.A.1.7) family. In terms of assembly, the complex is composed of two ATP-binding proteins (PstB), two transmembrane proteins (PstC and PstA) and a solute-binding protein (PstS).

The protein resides in the cell membrane. It carries out the reaction phosphate(out) + ATP + H2O = ADP + 2 phosphate(in) + H(+). Part of the ABC transporter complex PstSACB involved in phosphate import. Responsible for energy coupling to the transport system. This chain is Phosphate import ATP-binding protein PstB, found in Geobacillus kaustophilus (strain HTA426).